Here is a 71-residue protein sequence, read N- to C-terminus: DNA-directed RNA polymerase subunit epsilon (71 aa).

This sequence belongs to the RNA polymerase subunit epsilon family. In terms of assembly, monomer. RNAP is composed of a core of 2 alpha, a beta and a beta' subunit. The core is associated with a delta subunit, and at least one of epsilon or omega. When a sigma factor is associated with the core the holoenzyme is formed, which can initiate transcription.

It catalyses the reaction RNA(n) + a ribonucleoside 5'-triphosphate = RNA(n+1) + diphosphate. In terms of biological role, a non-essential component of RNA polymerase (RNAP). Has a similar structure to bacteriophage T7 protein Gp2 (AC P03704), which is known to bind to RNAP in the DNA binding-cleft. Unlike Gp2 however, this protein does not inhibit transcription initiation. The sequence is that of DNA-directed RNA polymerase subunit epsilon from Geobacillus stearothermophilus (strain DSM 13240 / CIP 106956 / 10).